Reading from the N-terminus, the 419-residue chain is UDP-N-acetylglucosamine 1-carboxyvinyltransferase (419 aa).

Lys-22 to Asn-23 lines the phosphoenolpyruvate pocket. Position 92 (Arg-92) interacts with UDP-N-acetyl-alpha-D-glucosamine. Cys-116 serves as the catalytic Proton donor. 2-(S-cysteinyl)pyruvic acid O-phosphothioketal is present on Cys-116. UDP-N-acetyl-alpha-D-glucosamine is bound by residues Arg-121 to Gln-125, Asp-305, and Ile-327.

This sequence belongs to the EPSP synthase family. MurA subfamily.

The protein localises to the cytoplasm. The enzyme catalyses phosphoenolpyruvate + UDP-N-acetyl-alpha-D-glucosamine = UDP-N-acetyl-3-O-(1-carboxyvinyl)-alpha-D-glucosamine + phosphate. It participates in cell wall biogenesis; peptidoglycan biosynthesis. Functionally, cell wall formation. Adds enolpyruvyl to UDP-N-acetylglucosamine. This is UDP-N-acetylglucosamine 1-carboxyvinyltransferase from Trichlorobacter lovleyi (strain ATCC BAA-1151 / DSM 17278 / SZ) (Geobacter lovleyi).